Reading from the N-terminus, the 311-residue chain is Formimidoylglutamase (311 aa).

His-130, Asp-155, His-157, Asp-159, Cys-242, and Asp-244 together coordinate Mn(2+).

This sequence belongs to the arginase family. Mn(2+) is required as a cofactor.

The catalysed reaction is N-formimidoyl-L-glutamate + H2O = formamide + L-glutamate. It functions in the pathway amino-acid degradation; L-histidine degradation into L-glutamate; L-glutamate from N-formimidoyl-L-glutamate (hydrolase route): step 1/1. Catalyzes the conversion of N-formimidoyl-L-glutamate to L-glutamate and formamide. In Staphylococcus epidermidis (strain ATCC 35984 / DSM 28319 / BCRC 17069 / CCUG 31568 / BM 3577 / RP62A), this protein is Formimidoylglutamase.